The sequence spans 122 residues: Large ribosomal subunit protein bL12 (122 aa).

The protein belongs to the bacterial ribosomal protein bL12 family. Homodimer. Part of the ribosomal stalk of the 50S ribosomal subunit. Forms a multimeric L10(L12)X complex, where L10 forms an elongated spine to which 2 to 4 L12 dimers bind in a sequential fashion. Binds GTP-bound translation factors.

Its function is as follows. Forms part of the ribosomal stalk which helps the ribosome interact with GTP-bound translation factors. Is thus essential for accurate translation. In Vibrio vulnificus (strain CMCP6), this protein is Large ribosomal subunit protein bL12.